A 317-amino-acid polypeptide reads, in one-letter code: Sperm acrosome membrane-associated protein 6 (317 aa).

The signal sequence occupies residues 1–18 (MFVFIAKLLIFSSVITSA). Topologically, residues 19-281 (FTCYQCFIDE…PSFSFWLPRP (263 aa)) are extracellular. 5 disulfide bridges follow: Cys-21–Cys-143, Cys-24–Cys-146, Cys-35–Cys-51, Cys-128–Cys-151, and Cys-132–Cys-157. An N-linked (GlcNAc...) asparagine glycan is attached at Asn-29. The Ig-like domain maps to 123–237 (PRVSGCLPPC…EVLSQEQSLV (115 aa)). Asn-168 carries an N-linked (GlcNAc...) asparagine glycan. The cysteines at positions 174 and 227 are disulfide-linked. The chain crosses the membrane as a helical span at residues 282-302 (ALLITCLTATMLLIFLSLGAM). The Cytoplasmic portion of the chain corresponds to 303 to 317 (CRLWYQIRTNVSNPA).

Belongs to the SPACA6 family. Forms a complex with izumo1 and tmem81 on spermatocyte cell membrane. The complex binds to oocyte protein bncr. Expressed in testis.

The protein resides in the cytoplasmic vesicle. Its subcellular location is the secretory vesicle. It is found in the acrosome membrane. Its function is as follows. Sperm protein required for fusion of sperm with the egg membrane during fertilization. May regulate the expression of sperm surface protein DCST2. This is Sperm acrosome membrane-associated protein 6 from Danio rerio (Zebrafish).